The sequence spans 367 residues: uncharacterized protein (367 aa).

The 231-residue stretch at 4-234 folds into the ABC transporter domain; the sequence is LTFEHVKKSY…PANLFVAGFI (231 aa). 36–43 lines the ATP pocket; the sequence is GPSGCGKS.

The protein belongs to the ABC transporter superfamily.

This is an uncharacterized protein from Bacillus subtilis (strain 168).